Reading from the N-terminus, the 353-residue chain is Alanine racemase (353 aa).

The Proton acceptor; specific for D-alanine role is filled by K33. K33 is subject to N6-(pyridoxal phosphate)lysine. Substrate is bound at residue R129. Y250 acts as the Proton acceptor; specific for L-alanine in catalysis. M298 provides a ligand contact to substrate.

Belongs to the alanine racemase family. Pyridoxal 5'-phosphate is required as a cofactor.

The enzyme catalyses L-alanine = D-alanine. It functions in the pathway amino-acid biosynthesis; D-alanine biosynthesis; D-alanine from L-alanine: step 1/1. Functionally, catalyzes the interconversion of L-alanine and D-alanine. May also act on other amino acids. This Aromatoleum aromaticum (strain DSM 19018 / LMG 30748 / EbN1) (Azoarcus sp. (strain EbN1)) protein is Alanine racemase (alr).